The sequence spans 375 residues: Ribosomal RNA large subunit methyltransferase G (375 aa).

The protein belongs to the methyltransferase superfamily. RlmG family.

It is found in the cytoplasm. The catalysed reaction is guanosine(1835) in 23S rRNA + S-adenosyl-L-methionine = N(2)-methylguanosine(1835) in 23S rRNA + S-adenosyl-L-homocysteine + H(+). In terms of biological role, specifically methylates the guanine in position 1835 (m2G1835) of 23S rRNA. This chain is Ribosomal RNA large subunit methyltransferase G, found in Erwinia tasmaniensis (strain DSM 17950 / CFBP 7177 / CIP 109463 / NCPPB 4357 / Et1/99).